Here is a 448-residue protein sequence, read N- to C-terminus: Vicilin Cor a 11.0101 (448 aa).

Residues 1–44 (MLPKEDPELKKCKHKCRDERQFDEQQRRDGKQICEEKARERQQE) show a composition bias toward basic and acidic residues. A disordered region spans residues 1-66 (MLPKEDPELK…QEENPYVFQD (66 aa)). A glycan (N-linked (GlcNAc...) asparagine) is linked at N47. 2 consecutive Cupin type-1 domains span residues 84-220 (ENFT…EQLE) and 263-418 (INLL…REVE). N301 carries an N-linked (GlcNAc...) asparagine glycan. Cu cation contacts are provided by C333, H335, and H362.

Belongs to the 7S seed storage protein family. Homotrimer. Homohexamer. Post-translationally, N-glycosylated at Asn-301 mostly with xylosylated paucimannosidic-type N-glycan MMX (an N-linked glycan with beta-1,2-xylose residue in the structure) and also with MMXF (a complex N-linked glycan with alpha-1,3-fucose and beta-1,2-xylose residues in the structure). A mixture of proteolytically processed and unprocessed subunits exist. In terms of tissue distribution, expressed in seed (at protein level). Expressed in seed.

Seed storage protein. Does not have superoxide dismutase (SOD) activity. This is Vicilin Cor a 11.0101 from Corylus avellana (European hazel).